We begin with the raw amino-acid sequence, 256 residues long: Complex I assembly factor TIMMDC1, mitochondrial (256 aa).

The interval 1 to 27 (MAQSDPPKSPDPPLPTSIRNPQTPESG) is disordered. 2 helical membrane-spanning segments follow: residues 111 to 131 (WGWR…GLTV) and 159 to 179 (VGLL…GALI).

Belongs to the Tim17/Tim22/Tim23 family. As to quaternary structure, associates with the intermediate 315 kDa subcomplex of incompletely assembled complex I.

It is found in the mitochondrion membrane. In terms of biological role, chaperone protein involved in the assembly of the mitochondrial NADH:ubiquinone oxidoreductase complex (complex I). Participates in constructing the membrane arm of complex I. The chain is Complex I assembly factor TIMMDC1, mitochondrial (timmdc1) from Xenopus laevis (African clawed frog).